Reading from the N-terminus, the 1212-residue chain is Solute carrier family 12 member 2 (1212 aa).

The residue at position 1 (Met-1) is an N-acetylmethionine. Over 1 to 286 (MEPRPTAPSS…AESKGVVKFG (286 aa)) the chain is Cytoplasmic. Disordered regions lie at residues 36 to 81 (GTAV…QSRF), 112 to 138 (GAKQTPADGEASGESEPAKGSEEAKGR), and 150 to 193 (SSAE…GGGS). Ser-77 and Ser-79 each carry phosphoserine. Positions 80-83 (RFQV) match the RFXV motif 1 motif. The segment covering 127–137 (EPAKGSEEAKG) has biased composition (basic and acidic residues). The RFXV motif 2 motif lies at 138-141 (RFRV). The segment covering 150-160 (SSAEDSLSDAA) has biased composition (low complexity). Phosphothreonine; by OXSR1 and STK39 is present on residues Thr-203, Thr-207, and Thr-212. Thr-217 and Thr-230 each carry phosphothreonine. Ser-242 is modified (phosphoserine). At Thr-266 the chain carries Phosphothreonine. A discontinuously helical transmembrane segment spans residues 287-316 (WIKGVLVRCMLNIWGVMLFIRLSWIVGQAG). Position 297 (Leu-297) interacts with Na(+). K(+) contacts are provided by Asn-298 and Ile-299. Trp-300 is a binding site for Na(+). Residues Gly-301, Val-302, and Met-303 each contribute to the chloride site. A helical transmembrane segment spans residues 317–336 (IGLSVLVIMMATVVTTITGL). The Cytoplasmic segment spans residues 337–367 (STSAIATNGFVRGGGAYYLISRSLGPEFGGA). A helical transmembrane segment spans residues 368–395 (IGLIFAFANAVAVAMYVVGFAETVVELL). Chloride is bound at residue Phe-372. Tyr-383 is a binding site for K(+). Residues 396–405 (KEHSILMIDE) lie on the Extracellular side of the membrane. Residues 406 to 429 (INDIRIIGAITVVILLGISVAGME) form a helical membrane-spanning segment. Residues 430 to 432 (WEA) lie on the Cytoplasmic side of the membrane. A helical membrane pass occupies residues 433–454 (KAQIVLLVILLLAIGDFVIGTF). The Extracellular portion of the chain corresponds to 455 to 486 (IPLESKKPKGFFGYKSEIFNENFGPDFREEET). Residues 487–504 (FFSVFAIFFPAATGILAG) traverse the membrane as a discontinuously helical segment. Residues Pro-496, Ala-497, and Thr-499 each coordinate K(+). Positions 496 and 497 each coordinate chloride. Residues Gly-500 and Ile-501 each contribute to the chloride site. At 505–519 (ANISGDLADPQSAIP) the chain is on the cytoplasmic side. The chain crosses the membrane as a helical span at residues 520 to 541 (KGTLLAILITTLVYVGIAVSVG). The Extracellular portion of the chain corresponds to 542-598 (SCVVRDATGNVNDTIVTELTNCTSAACKLNFDFSSCESSPCSYGLMNNFQVMSMVSG). Asn-553 and Asn-562 each carry an N-linked (GlcNAc...) asparagine glycan. 2 cysteine pairs are disulfide-bonded: Cys-563/Cys-568 and Cys-577/Cys-582. Residues 599-623 (FTPLISAGIFSATLSSALASLVSAP) traverse the membrane as a helical segment. Na(+) is bound by residues Ala-610, Ser-613, and Ser-614. The Cytoplasmic segment spans residues 624 to 651 (KIFQALCKDNIYPAFQMFAKGYGKNNEP). Helical transmembrane passes span 652–672 (LRGYILTFLIALGFILIAELN) and 673–691 (VIAPIISNFFLASYALINF). Positions 682 and 686 each coordinate chloride. The Cytoplasmic segment spans residues 692–714 (SVFHASLAKSPGWRPAFKYYNMW). Helical transmembrane passes span 715–732 (ISLLGAILCCIVMFVINW) and 733–745 (WAALLTYVIVLGL). Topologically, residues 746-1212 (YIYVTYKKPD…NHQSVLTFYS (467 aa)) are cytoplasmic. The tract at residues 761–778 (STQALTYLNALQHSIRLS) is scissor helix. A phosphoserine mark is found at Ser-940 and Ser-944. A compositionally biased stretch (basic and acidic residues) spans 962 to 978 (LDTSKPLSEKPITHKVE). The segment at 962-989 (LDTSKPLSEKPITHKVEEEDGKTATQPL) is disordered. At Ser-994 the chain carries Phosphoserine.

Belongs to the SLC12A transporter family. Homodimer; adopts a domain-swap conformation at the scissor helices connecting the transmembrane domain and C-terminal domain. Post-translationally, phosphorylated at Thr-203, Thr-207 and Thr-212 by OXSR1/OSR1 and STK39/SPAK downstream of WNK kinases (WNK1, WNK2, WNK3 or WNK4), promoting its activity. As to expression, expressed in many tissues.

It is found in the basolateral cell membrane. It carries out the reaction K(+)(out) + 2 chloride(out) + Na(+)(out) = K(+)(in) + 2 chloride(in) + Na(+)(in). Activated following phosphorylation by OXSR1/OSR1 and STK39/SPAK downstream of WNK kinases (WNK1, WNK2, WNK3 or WNK4). Inhibited by bumetanide. Inhibited by furosemide. Cation-chloride cotransporter which mediates the electroneutral transport of chloride, potassium and/or sodium ions across the membrane. Plays a vital role in the regulation of ionic balance and cell volume. The protein is Solute carrier family 12 member 2 (SLC12A2) of Homo sapiens (Human).